Here is a 2344-residue protein sequence, read N- to C-terminus: Pecanex-like protein 1 (2344 aa).

The next 2 helical transmembrane spans lie at 33 to 53 (ALHLYLWLFLLGLPFTLYMAL) and 57 to 77 (MIIVAVYCPVVAAVFIILKMV). Disordered stretches follow at residues 101–163 (QRAK…GSSR), 271–290 (SHSYRKEHRPRGVPRTSSSA), 306–692 (QQQR…TRAR), and 749–837 (VTRS…VQSR). Positions 143-163 (SSRNSYAGLDPSNQIGSGSSR) are enriched in polar residues. Over residues 272–282 (HSYRKEHRPRG) the composition is skewed to basic residues. The segment covering 328–343 (RESSAGKSCPPAQSQP) has biased composition (polar residues). Residues 372-390 (SLRSLSTRSSGSTESYCSG) are compositionally biased toward low complexity. The span at 396 to 406 (NSTLSSYKSEQ) shows a compositional bias: polar residues. 3 stretches are compositionally biased toward basic and acidic residues: residues 416-458 (LSEH…DKTA), 508-522 (RPPEQSAESKEEQSE), and 531-547 (RVCKDDGGKQKEGDVRP). A compositionally biased stretch (basic residues) spans 557-572 (TSAHKPGRRRTGKKRA). Over residues 616 to 638 (SIHSAHQFSSDSSSSATSHSCQS) the composition is skewed to low complexity. The span at 749–758 (VTRSRNSLPS) shows a compositional bias: polar residues. 2 stretches are compositionally biased toward low complexity: residues 770 to 781 (AATGAAQASEEA) and 817 to 835 (LSLQDGQQGQQSTAQVKVQ). The next 3 membrane-spanning stretches (helical) occupy residues 1010-1030 (ILAVVLAILVAFLGSILLIQG), 1035-1055 (IWVFQFCLVIASCQYSLLKSV), and 1069-1089 (IIAYSRPVYFCLCCGLIWLLD). Asn-1094 carries N-linked (GlcNAc...) asparagine glycosylation. Residues 1119-1139 (LVIVFTLCFPIVFFIGLLPQV) traverse the membrane as a helical segment. Asn-1158 is a glycosylation site (N-linked (GlcNAc...) asparagine). 4 consecutive transmembrane segments (helical) span residues 1163–1183 (LLAALYSFLCSIVAVALLYGL), 1196–1216 (HVPVLFSVFCGLLVAVSYHLS), 1269–1289 (LVVCVIIGVLYFAIHVSTVFT), and 1297–1317 (YVLYALVGVVGLVTHYVLPQV). Asn-1582, Asn-1723, Asn-1985, and Asn-2075 each carry an N-linked (GlcNAc...) asparagine glycan. Positions 2051 to 2123 (EDSDTGGGTS…SSLVRQSPAR (73 aa)) are disordered. 2 stretches are compositionally biased toward polar residues: residues 2061 to 2081 (CPGNSAVTASDPHNNVSQGST) and 2095 to 2118 (PTTSYPPTLGTSHSAHSVQSSLVR). N-linked (GlcNAc...) asparagine glycosylation is found at Asn-2231, Asn-2237, and Asn-2263.

This sequence belongs to the pecanex family.

The protein localises to the membrane. In Mus musculus (Mouse), this protein is Pecanex-like protein 1.